The primary structure comprises 224 residues: Deoxyguanosine kinase (224 aa).

8–16 (GPIGAGKSS) lines the ATP pocket. The substrate site is built by Glu32, Tyr44, and Gln55. Residue Asp78 is the Proton acceptor of the active site. Substrate is bound by residues Arg79, Asp84, and Glu149.

This sequence belongs to the DCK/DGK family. As to quaternary structure, heterodimer of a deoxyadenosine (DAK) and a deoxyguanosine kinase (DGK).

The enzyme catalyses 2'-deoxyguanosine + ATP = dGMP + ADP + H(+). Its function is as follows. DGK/DAK plays an essential role in generating the deoxyribonucleotide precursors, dGTP and dATP, for DNA metabolism. This Lactobacillus johnsonii (strain CNCM I-12250 / La1 / NCC 533) protein is Deoxyguanosine kinase.